Consider the following 738-residue polypeptide: ATP-dependent RNA helicase rok1 (738 aa).

2 disordered regions span residues 1-112 (MDAF…DEEV) and 145-176 (VASEEPKKKKKKRKQQEEEESKVPLTKKEQKK). A compositionally biased stretch (polar residues) spans 17 to 29 (ATPSSAQSSTRLP). The span at 92–104 (SKEEKQEQERSGE) shows a compositional bias: basic and acidic residues. Residues 190–218 (ELRSKYKISSRLAENIAEQGFTVPTEVQL) carry the Q motif motif. The Helicase ATP-binding domain occupies 231–447 (KAGESVEPDL…KSTIKERKEA (217 aa)). 244 to 251 (APTGSGKT) is an ATP binding site. Residues 316–356 (VVEREDEDDDGDDSSSEDGDESSESEHEERPIAKKSKGKAP) are disordered. Over residues 319–338 (REDEDDDGDDSSSEDGDESS) the composition is skewed to acidic residues. The DEAD box motif lies at 394 to 397 (DEAD). Positions 487–655 (GLRQLLHPTA…SIQKWLLDAL (169 aa)) constitute a Helicase C-terminal domain. Positions 663–738 (KKELKKHGVK…GNESWDGLEN (76 aa)) are disordered. A compositionally biased stretch (basic and acidic residues) spans 697-706 (GFERRIENKK).

It belongs to the DEAD box helicase family. DDX52/ROK1 subfamily. Interacts with the U3 snoRNA and is associated with the 90S and 40S pre-ribosomes.

The protein localises to the nucleus. Its subcellular location is the nucleolus. The catalysed reaction is ATP + H2O = ADP + phosphate + H(+). Functionally, ATP-dependent RNA helicase involved in 40S ribosomal subunit biogenesis. Required for the processing and cleavage of 35S pre-rRNA at sites A0, A1, and A2, leading to mature 18S rRNA. This is ATP-dependent RNA helicase rok1 (rok1) from Aspergillus clavatus (strain ATCC 1007 / CBS 513.65 / DSM 816 / NCTC 3887 / NRRL 1 / QM 1276 / 107).